The primary structure comprises 192 residues: MAREREGRRRDDREERDSEFVDKLVHINRVAKVVKGGRRFGFAALVVVGDQKGRVGFGHGKAREVPEAIRKATEAAKRGLIRVSLREGRTLHHDVNGRHGAGKVILRAAPQGTGIIAGGPMRAVFETLGMQDVVAKSLGSSNPYNLVRATFDALKNEDSPRSVAARRGLKVSALQARRRDADPADTSDAAVA.

In terms of domain architecture, S5 DRBM spans phenylalanine 20–valine 83. The segment at serine 162–alanine 192 is disordered.

It belongs to the universal ribosomal protein uS5 family. In terms of assembly, part of the 30S ribosomal subunit. Contacts proteins S4 and S8.

In terms of biological role, with S4 and S12 plays an important role in translational accuracy. Located at the back of the 30S subunit body where it stabilizes the conformation of the head with respect to the body. The sequence is that of Small ribosomal subunit protein uS5 from Methylorubrum populi (strain ATCC BAA-705 / NCIMB 13946 / BJ001) (Methylobacterium populi).